Reading from the N-terminus, the 260-residue chain is Imidazole glycerol phosphate synthase subunit HisF (260 aa).

Catalysis depends on residues D11 and D130.

The protein belongs to the HisA/HisF family. As to quaternary structure, heterodimer of HisH and HisF.

It localises to the cytoplasm. It carries out the reaction 5-[(5-phospho-1-deoxy-D-ribulos-1-ylimino)methylamino]-1-(5-phospho-beta-D-ribosyl)imidazole-4-carboxamide + L-glutamine = D-erythro-1-(imidazol-4-yl)glycerol 3-phosphate + 5-amino-1-(5-phospho-beta-D-ribosyl)imidazole-4-carboxamide + L-glutamate + H(+). It functions in the pathway amino-acid biosynthesis; L-histidine biosynthesis; L-histidine from 5-phospho-alpha-D-ribose 1-diphosphate: step 5/9. IGPS catalyzes the conversion of PRFAR and glutamine to IGP, AICAR and glutamate. The HisF subunit catalyzes the cyclization activity that produces IGP and AICAR from PRFAR using the ammonia provided by the HisH subunit. This is Imidazole glycerol phosphate synthase subunit HisF from Thermomicrobium roseum (strain ATCC 27502 / DSM 5159 / P-2).